A 432-amino-acid chain; its full sequence is Enolase (432 aa).

Position 163 (Gln-163) interacts with (2R)-2-phosphoglycerate. Glu-205 (proton donor) is an active-site residue. The Mg(2+) site is built by Asp-242, Glu-285, and Asp-312. (2R)-2-phosphoglycerate is bound by residues Lys-337, Arg-366, Ser-367, and Lys-388. Lys-337 (proton acceptor) is an active-site residue.

This sequence belongs to the enolase family. Mg(2+) is required as a cofactor.

It is found in the cytoplasm. Its subcellular location is the secreted. The protein resides in the cell surface. It catalyses the reaction (2R)-2-phosphoglycerate = phosphoenolpyruvate + H2O. Its pathway is carbohydrate degradation; glycolysis; pyruvate from D-glyceraldehyde 3-phosphate: step 4/5. Catalyzes the reversible conversion of 2-phosphoglycerate (2-PG) into phosphoenolpyruvate (PEP). It is essential for the degradation of carbohydrates via glycolysis. This is Enolase from Bifidobacterium longum (strain DJO10A).